Reading from the N-terminus, the 206-residue chain is Small ribosomal subunit protein uS5 (206 aa).

Over residues Met1 to Asn23 the composition is skewed to polar residues. The disordered stretch occupies residues Met1–Glu52. Positions Glu24–Glu52 are enriched in basic and acidic residues. Residues Trp50–Val113 form the S5 DRBM domain.

Belongs to the universal ribosomal protein uS5 family. Part of the 30S ribosomal subunit. Contacts proteins S4 and S8.

With S4 and S12 plays an important role in translational accuracy. Its function is as follows. Located at the back of the 30S subunit body where it stabilizes the conformation of the head with respect to the body. This is Small ribosomal subunit protein uS5 from Prochlorococcus marinus subsp. pastoris (strain CCMP1986 / NIES-2087 / MED4).